We begin with the raw amino-acid sequence, 417 residues long: MDKLIIKGGKKLAGEVTVSGSKNASLPIFISTILAPAEHEISNVPFLRDINTTIKVLEQLGAKVDGNGNIVKIDTTGVDNFEATYELVKTMRASVLVLGPLLARFGKARVSLPGGCAIGARPINLHLKGLAAMGADINLTHGYVEAKAKQLKGARINFDVSTVGGTEHLMMAAATAKGETILENAAREPEIVDLANVLTKMGARIDGAGTDTIRISGVKELGPVSHRVMPDRIEAGTFMIAAAITGGDIKVRNMQLEHLDALVFKLQDAGVEIINKDNVVRVKGPRKIKGVNIKTRPYPGFPTDMQAQFMALMCLADSASVISENIFENRFMHVSELMRFGADITTEGNTATVKGVKKLSGAPVMATDLRASACLILAGLAADNTTEVSRIYHLDRGYESIEKKLAGLGADIVRVQE.

22–23 (KN) lines the phosphoenolpyruvate pocket. UDP-N-acetyl-alpha-D-glucosamine is bound at residue R92. C116 (proton donor) is an active-site residue. C116 bears the 2-(S-cysteinyl)pyruvic acid O-phosphothioketal mark. Residues D304 and I326 each contribute to the UDP-N-acetyl-alpha-D-glucosamine site.

The protein belongs to the EPSP synthase family. MurA subfamily.

The protein localises to the cytoplasm. The catalysed reaction is phosphoenolpyruvate + UDP-N-acetyl-alpha-D-glucosamine = UDP-N-acetyl-3-O-(1-carboxyvinyl)-alpha-D-glucosamine + phosphate. The protein operates within cell wall biogenesis; peptidoglycan biosynthesis. Cell wall formation. Adds enolpyruvyl to UDP-N-acetylglucosamine. This is UDP-N-acetylglucosamine 1-carboxyvinyltransferase from Geotalea uraniireducens (strain Rf4) (Geobacter uraniireducens).